Consider the following 1867-residue polypeptide: Probable serine/threonine-protein kinase roco8 (1867 aa).

Residues 16-93 enclose the DEP 1 domain; that stretch reads SSDGLQIKDR…DDYIFYQFDN (78 aa). 2 disordered regions span residues 96-115 and 121-225; these read NNNN…TTAT and VSTK…NSFN. The segment covering 121–223 has biased composition (low complexity); it reads VSTKIGSIGK…NSNSTYNSNS (103 aa). The DEP 2 domain occupies 264–342; the sequence is GDKGLKLQKK…NNNNGGGGVM (79 aa). LRR repeat units lie at residues 491–512, 515–536, 540–561, 563–584, 586–607, 609–631, 633–656, and 657–678; these read RLDD…IINT, FLRI…ESIA, NLES…FSRL, LLTK…VFQL, NLEE…IGSL, SLEK…LGLL, RLKS…STLP, and LLEQ…ITSK. Residues 693 to 941 enclose the Roc domain; that stretch reads GTETLSHIKL…NEIIQTLLNQ (249 aa). 2 disordered regions span residues 763 to 813 and 942 to 961; these read QNGI…KKRP and SNNN…KQSN. The segment covering 768-793 has biased composition (low complexity); the sequence is TSSSNLNLSTGTLPPPTQLSSSTSEL. The COR domain maps to 974 to 1111; sequence PSIYITLETN…ILYTLKNNSN (138 aa). Positions 1163–1207 are disordered; sequence SPSLSLSNSSQSVFTNPNNNNNNKSEQQQQQQQQQQQPQPISTSP. The Protein kinase domain maps to 1456–1864; it reads LIYQEEIGVG…TLNEIKDSTI (409 aa). Residues 1462–1470 and lysine 1483 contribute to the ATP site; that span reads IGVGGFSRV. Positions 1509 to 1546 are disordered; the sequence is SNSSLSISLSSSTSSLSPPIVNNNNNNNNLNNNLNNLN. Residue aspartate 1721 is the Proton acceptor of the active site.

It belongs to the protein kinase superfamily. TKL Ser/Thr protein kinase family. ROCO subfamily.

The catalysed reaction is L-seryl-[protein] + ATP = O-phospho-L-seryl-[protein] + ADP + H(+). The enzyme catalyses L-threonyl-[protein] + ATP = O-phospho-L-threonyl-[protein] + ADP + H(+). The chain is Probable serine/threonine-protein kinase roco8 (roco8) from Dictyostelium discoideum (Social amoeba).